Reading from the N-terminus, the 427-residue chain is Galactose-3-O-sulfotransferase 3 (427 aa).

At 1–19 (MPPIFQRLQQATKMSRRKI) the chain is on the cytoplasmic side. The chain crosses the membrane as a helical; Signal-anchor for type II membrane protein span at residues 20–40 (LLLVLGCSTLSLLIHQGAQLS). Residues 41 to 427 (WYPKLFPLSC…RPIRALRPGH (387 aa)) lie on the Lumenal side of the membrane. Residues asparagine 90, asparagine 109, asparagine 176, and asparagine 301 are each glycosylated (N-linked (GlcNAc...) asparagine). The tract at residues 404–427 (MRLRPEPVLDNPPPRPIRALRPGH) is disordered.

It belongs to the galactose-3-O-sulfotransferase family. Requires Mg(2+) as cofactor.

The protein localises to the golgi apparatus. It is found in the golgi stack membrane. The protein operates within protein modification; carbohydrate sulfation. In terms of biological role, transfers a sulfate to position 3 of non-reducing beta-galactosyl residues in N-glycans and core2-branched O-glycans. Has high activity towards Gal-beta-1,4-GlcNAc, Gal-beta-1,4(Fuc-alpha-1,3)GlcNAc and lower activity towards Gal-beta-1,3(Fuc-alpha-1,4)GlcNAc. In Bos taurus (Bovine), this protein is Galactose-3-O-sulfotransferase 3 (GAL3ST3).